We begin with the raw amino-acid sequence, 149 residues long: Probable flagellum biosynthesis repressor protein FlbT (149 aa).

Belongs to the FlbT family.

Its function is as follows. Has a post-transcriptional repressor function in flagellum biogenesis. Associates with the 5'-UTR of fljK mRNA and promotes its degradation. This Sinorhizobium medicae (strain WSM419) (Ensifer medicae) protein is Probable flagellum biosynthesis repressor protein FlbT.